Here is a 546-residue protein sequence, read N- to C-terminus: SusD-like protein BACOVA_02651 (546 aa).

An N-terminal signal peptide occupies residues 1 to 21; sequence MRIFMKSKLLVIATTALLFAA. A lipid anchor (N-palmitoyl cysteine) is attached at C22. C22 carries the S-diacylglycerol cysteine lipid modification.

This sequence belongs to the SusD family.

The protein localises to the cell outer membrane. It functions in the pathway glucan metabolism; xyloglucan degradation. Polysaccharide-binding protein present at the surface of the cell. Probably mediates xyloglucan-binding before xyloglucan transport in the periplasm for degradation. This Bacteroides ovatus (strain ATCC 8483 / DSM 1896 / JCM 5824 / BCRC 10623 / CCUG 4943 / NCTC 11153) protein is SusD-like protein BACOVA_02651.